We begin with the raw amino-acid sequence, 142 residues long: Centromere protein S (142 aa).

The segment at 107 to 142 (LKGKAKKKRKPEDESRSSRESMAEELDGAEELQSES) is disordered. Positions 116-128 (KPEDESRSSRESM) are enriched in basic and acidic residues. Acidic residues predominate over residues 129 to 142 (AEELDGAEELQSES).

This sequence belongs to the TAF9 family. CENP-S/MHF1 subfamily. In terms of assembly, heterodimer with CENPX, sometimes called MHF; this interaction stabilizes both partners. MHF heterodimers can assemble to form tetrameric structures. MHF also coassemble with CENPT-CENPW heterodimers at centromeres to form the tetrameric CENP-T-W-S-X complex. Forms a discrete complex with FANCM and CENPX, called FANCM-MHF; this interaction, probably mediated by direct binding between CENPS and FANCM, leads to synergistic activation of double-stranded DNA binding and strongly stimulates FANCM-mediated DNA remodeling. Recruited by FANCM to the Fanconi anemia (FA) core complex, which consists of CENPS, CENPX, FANCA, FANCB, FANCC, FANCE, FANCF, FANCG, FANCL, FANCM, FAAP24 and FAAP100. The FA core complex associates with Bloom syndrome (BLM) complex, which consists of at least BLM, DNA topoisomerase 3-alpha (TOP3A), RMI1/BLAP75, RPA1/RPA70 and RPA2/RPA32. The super complex between FA and BLM is called BRAFT. Component of the CENPA-CAD complex, composed of CENPI, CENPK, CENPL, CENPO, CENPP, CENPQ, CENPR and CENPS. The CENPA-CAD complex is probably recruited on centromeres by the CENPA-NAC complex, at least composed of CENPA, CENPC, CENPH, CENPM, CENPN, CENPT and CENPU.

It localises to the nucleus. The protein resides in the chromosome. It is found in the centromere. Its subcellular location is the kinetochore. In terms of biological role, DNA-binding component of the Fanconi anemia (FA) core complex. Required for the normal activation of the FA pathway, leading to monoubiquitination of the FANCI-FANCD2 complex in response to DNA damage, cellular resistance to DNA cross-linking drugs, and prevention of chromosomal breakage. In complex with CENPX (MHF heterodimer), crucial cofactor for FANCM in both binding and ATP-dependent remodeling of DNA. Stabilizes FANCM. In complex with CENPX and FANCM (but not other FANC proteins), rapidly recruited to blocked forks and promotes gene conversion at blocked replication forks. In complex with CENPT, CENPW and CENPX (CENP-T-W-S-X heterotetramer), involved in the formation of a functional kinetochore outer plate, which is essential for kinetochore-microtubule attachment and faithful mitotic progression. As a component of MHF and CENP-T-W-S-X complexes, binds DNA and bends it to form a nucleosome-like structure. DNA-binding function is fulfilled in the presence of CENPX, with the following preference for DNA substates: Holliday junction &gt; double-stranded &gt; splay arm &gt; single-stranded. Does not bind DNA on its own. The chain is Centromere protein S (Cenps) from Mus musculus (Mouse).